We begin with the raw amino-acid sequence, 416 residues long: Serine hydroxymethyltransferase (416 aa).

Residues Leu118 and 122–124 (GHL) each bind (6S)-5,6,7,8-tetrahydrofolate. Lys226 is subject to N6-(pyridoxal phosphate)lysine. Residue Glu242 coordinates (6S)-5,6,7,8-tetrahydrofolate.

Belongs to the SHMT family. As to quaternary structure, homodimer. It depends on pyridoxal 5'-phosphate as a cofactor.

The protein resides in the cytoplasm. It catalyses the reaction (6R)-5,10-methylene-5,6,7,8-tetrahydrofolate + glycine + H2O = (6S)-5,6,7,8-tetrahydrofolate + L-serine. The protein operates within one-carbon metabolism; tetrahydrofolate interconversion. Its pathway is amino-acid biosynthesis; glycine biosynthesis; glycine from L-serine: step 1/1. In terms of biological role, catalyzes the reversible interconversion of serine and glycine with tetrahydrofolate (THF) serving as the one-carbon carrier. This reaction serves as the major source of one-carbon groups required for the biosynthesis of purines, thymidylate, methionine, and other important biomolecules. Also exhibits THF-independent aldolase activity toward beta-hydroxyamino acids, producing glycine and aldehydes, via a retro-aldol mechanism. The sequence is that of Serine hydroxymethyltransferase from Helicobacter pylori (strain J99 / ATCC 700824) (Campylobacter pylori J99).